A 283-amino-acid polypeptide reads, in one-letter code: Bifunctional protein FolD (283 aa).

NADP(+) is bound by residues 163–165, Ser188, and Ile229; that span reads GRS.

This sequence belongs to the tetrahydrofolate dehydrogenase/cyclohydrolase family. In terms of assembly, homodimer.

The enzyme catalyses (6R)-5,10-methylene-5,6,7,8-tetrahydrofolate + NADP(+) = (6R)-5,10-methenyltetrahydrofolate + NADPH. The catalysed reaction is (6R)-5,10-methenyltetrahydrofolate + H2O = (6R)-10-formyltetrahydrofolate + H(+). It participates in one-carbon metabolism; tetrahydrofolate interconversion. Catalyzes the oxidation of 5,10-methylenetetrahydrofolate to 5,10-methenyltetrahydrofolate and then the hydrolysis of 5,10-methenyltetrahydrofolate to 10-formyltetrahydrofolate. This chain is Bifunctional protein FolD, found in Latilactobacillus sakei subsp. sakei (strain 23K) (Lactobacillus sakei subsp. sakei).